The following is a 247-amino-acid chain: Terpene cyclase adrI (247 aa).

5 helical membrane-spanning segments follow: residues 20–40, 51–71, 76–96, 112–132, and 141–161; these read VAEFLRILAGICWTLNYFSML, TGIFPLCNDIGWEFIYAFIYP, HWEGGVRVWFLVHCIVIFFII, NLYFLYGIVTIGFAIGQYSFA, and FFYGGVLCQTLASLGPIAQIL. Asn-164 is a glycosylation site (N-linked (GlcNAc...) asparagine). 2 helical membrane-spanning segments follow: residues 179 to 199 and 205 to 225; these read FGGFIKLTIYYLTGNAAGPWF and KFYIGLTLILDFTYPICYYVI.

The protein belongs to the paxB family.

The protein localises to the membrane. It participates in secondary metabolite biosynthesis; terpenoid biosynthesis. Terpene cyclase; part of the gene cluster that mediates the biosynthesis of andrastins, meroterpenoid compounds that exhibit inhibitory activity against ras farnesyltransferase, suggesting that they could be promising leads for antitumor agents. The first step of the pathway is the synthesis of 3,5-dimethylorsellinic acid (DMOA) by the polyketide synthase adrD via condensation of one acetyl-CoA starter unit with 3 malonyl-CoA units and 2 methylations. DMAO is then converted to farnesyl-DMAO by the prenyltransferase adrG. The methyltransferase adrK catalyzes the methylation of the carboxyl group of farnesyl-DMAO to farnesyl-DMAO methyl ester which is further converted to epoxyfarnesyl-DMAO methyl ester by the FAD-dependent monooxygenase adrH. The terpene cyclase adrI then catalyzes the carbon skeletal rearrangement to generate the andrastin E, the first compound in the pathway having the andrastin scaffold, with the tetracyclic ring system. The post-cyclization tailoring enzymes adrF, adrE, adrJ, and adrA, are involved in the conversion of andrastin E into andrastin A. The short chain dehydrogenase adrF is responsible for the oxidation of the C-3 a hydroxyl group of andrastin E to yield the corresponding ketone, andrastin D. The ketoreductase adrE stereoselectively reduces the carbonyl moiety to reverse the stereochemistry of the C-3 position to yield andrastin F. The acetyltransferase adrJ is the acetyltransferase that attaches the acetyl group to the C-3 hydroxyl group of andrastin F to yield andrastin C. Finally, the cytochrome P450 monooxygenase adrA catalyzes two sequential oxidation reactions of the C-23 methyl group, to generate the corresponding alcohol andrastin B, and aldehyde andrastin A. This is Terpene cyclase adrI from Penicillium rubens (strain ATCC 28089 / DSM 1075 / NRRL 1951 / Wisconsin 54-1255) (Penicillium chrysogenum).